Reading from the N-terminus, the 715-residue chain is Fatty acid oxidation complex subunit alpha (715 aa).

The segment at 1–190 is enoyl-CoA hydratase; that stretch reads MTTTSAFMLN…KAGLVDDVVP (190 aa). A 3-hydroxyacyl-CoA dehydrogenase region spans residues 306 to 715; sequence GPLNSVGILG…WTNGETDQGN (410 aa).

It in the N-terminal section; belongs to the enoyl-CoA hydratase/isomerase family. In the central section; belongs to the 3-hydroxyacyl-CoA dehydrogenase family. As to quaternary structure, heterotetramer of two alpha chains (FadJ) and two beta chains (FadI).

The protein localises to the cytoplasm. The catalysed reaction is a (3S)-3-hydroxyacyl-CoA = a (2E)-enoyl-CoA + H2O. It catalyses the reaction a 4-saturated-(3S)-3-hydroxyacyl-CoA = a (3E)-enoyl-CoA + H2O. It carries out the reaction a (3S)-3-hydroxyacyl-CoA + NAD(+) = a 3-oxoacyl-CoA + NADH + H(+). The enzyme catalyses (3S)-3-hydroxybutanoyl-CoA = (3R)-3-hydroxybutanoyl-CoA. Its pathway is lipid metabolism; fatty acid beta-oxidation. Functionally, catalyzes the formation of a hydroxyacyl-CoA by addition of water on enoyl-CoA. Also exhibits 3-hydroxyacyl-CoA epimerase and 3-hydroxyacyl-CoA dehydrogenase activities. The protein is Fatty acid oxidation complex subunit alpha of Salmonella enteritidis PT4 (strain P125109).